We begin with the raw amino-acid sequence, 251 residues long: Coproheme decarboxylase (251 aa).

Fe-coproporphyrin III is bound by residues arginine 133, 147 to 151 (YPMSK), histidine 174, glutamine 187, and serine 225. Residue tyrosine 147 is part of the active site.

It belongs to the ChdC family. Type 1 subfamily. It depends on Fe-coproporphyrin III as a cofactor.

It carries out the reaction Fe-coproporphyrin III + 2 H2O2 + 2 H(+) = heme b + 2 CO2 + 4 H2O. It catalyses the reaction Fe-coproporphyrin III + H2O2 + H(+) = harderoheme III + CO2 + 2 H2O. The catalysed reaction is harderoheme III + H2O2 + H(+) = heme b + CO2 + 2 H2O. It functions in the pathway porphyrin-containing compound metabolism; protoheme biosynthesis. Functionally, involved in coproporphyrin-dependent heme b biosynthesis. Catalyzes the decarboxylation of Fe-coproporphyrin III (coproheme) to heme b (protoheme IX), the last step of the pathway. The reaction occurs in a stepwise manner with a three-propionate intermediate. In Listeria innocua serovar 6a (strain ATCC BAA-680 / CLIP 11262), this protein is Coproheme decarboxylase.